The sequence spans 198 residues: Glycerol-3-phosphate acyltransferase (198 aa).

The next 5 helical transmembrane spans lie at 1 to 21 (MILI…IPAA), 52 to 72 (GPAL…VGLA), 81 to 101 (WTAL…FLGF), 115 to 135 (LALD…CIWL), and 153 to 173 (LAAA…LAAL).

The protein belongs to the PlsY family. As to quaternary structure, probably interacts with PlsX.

It is found in the cell membrane. The enzyme catalyses an acyl phosphate + sn-glycerol 3-phosphate = a 1-acyl-sn-glycero-3-phosphate + phosphate. It functions in the pathway lipid metabolism; phospholipid metabolism. Functionally, catalyzes the transfer of an acyl group from acyl-phosphate (acyl-PO(4)) to glycerol-3-phosphate (G3P) to form lysophosphatidic acid (LPA). This enzyme utilizes acyl-phosphate as fatty acyl donor, but not acyl-CoA or acyl-ACP. The sequence is that of Glycerol-3-phosphate acyltransferase from Deinococcus geothermalis (strain DSM 11300 / CIP 105573 / AG-3a).